The following is a 497-amino-acid chain: Glucose-6-phosphate 1-dehydrogenase (497 aa).

Residues 17 to 24, Arg51, and Lys151 each bind NADP(+); that span reads GASGDLAK. Residues Lys151, 181-185, Glu219, and Asp238 each bind D-glucose 6-phosphate; that span reads HYLGK. Residue His243 is the Proton acceptor of the active site. Lys334 serves as a coordination point for NADP(+). D-glucose 6-phosphate is bound by residues Lys337 and Arg342. NADP(+) contacts are provided by Lys343, Arg347, and Arg371. D-glucose 6-phosphate is bound at residue Gln373. Residues 379–381, 399–401, Arg465, and Trp487 each bind NADP(+); these read YLK and DLS.

This sequence belongs to the glucose-6-phosphate dehydrogenase family.

It is found in the cytoplasm. The protein resides in the cytosol. It carries out the reaction D-glucose 6-phosphate + NADP(+) = 6-phospho-D-glucono-1,5-lactone + NADPH + H(+). It participates in carbohydrate degradation; pentose phosphate pathway; D-ribulose 5-phosphate from D-glucose 6-phosphate (oxidative stage): step 1/3. Cytosolic glucose-6-phosphate dehydrogenase that catalyzes the first and rate-limiting step of the oxidative branch within the pentose phosphate pathway/shunt, an alternative route to glycolysis for the dissimilation of carbohydrates and a major source of reducing power and metabolic intermediates for fatty acid and nucleic acid biosynthetic processes. In Dictyostelium discoideum (Social amoeba), this protein is Glucose-6-phosphate 1-dehydrogenase (g6pd-1).